The chain runs to 469 residues: Probable monogalactosyldiacylglycerol synthase 2, chloroplastic (469 aa).

Residues 1 to 42 (MVISVATPRRSIRDAVLGGVLGAGGRQLYQPLRCAFYDGAAG) constitute a chloroplast transit peptide.

It belongs to the glycosyltransferase 28 family.

It is found in the plastid. The protein localises to the chloroplast membrane. The enzyme catalyses a 1,2-diacyl-sn-glycerol + UDP-alpha-D-galactose = a 1,2-diacyl-3-O-(beta-D-galactosyl)-sn-glycerol + UDP + H(+). Involved in the synthesis of the major structural component of photosynthetic membranes. This Oryza sativa subsp. japonica (Rice) protein is Probable monogalactosyldiacylglycerol synthase 2, chloroplastic (MGD2).